A 546-amino-acid chain; its full sequence is (-)-5-epieremophilene synthase STPS1 (546 aa).

Mg(2+) contacts are provided by Asp299, Asp303, Asp442, Thr446, and Glu450. The short motif at 299–303 (DDTYD) is the DDXXD motif element.

The protein belongs to the terpene synthase family. Tpsa subfamily. In terms of assembly, monomer. Mg(2+) serves as cofactor. In terms of tissue distribution, highly expressed in leaves and at lower levels in flowers.

It catalyses the reaction (2E,6E)-farnesyl diphosphate = (-)-5-epi-eremophilene + diphosphate. It functions in the pathway secondary metabolite biosynthesis; terpenoid biosynthesis. In terms of biological role, sesquiterpene synthase that catalyzes the conversion of farnesyl diphosphate to (-)-5-epi-eremophilene. The polypeptide is (-)-5-epieremophilene synthase STPS1 (Salvia miltiorrhiza (Chinese sage)).